The following is a 447-amino-acid chain: UPF0210 protein OEOE_0945 (447 aa).

The protein belongs to the UPF0210 family. In terms of assembly, homodimer.

This is UPF0210 protein OEOE_0945 from Oenococcus oeni (strain ATCC BAA-331 / PSU-1).